The sequence spans 218 residues: Large ribosomal subunit protein uL3 (218 aa).

The tract at residues 133 to 158 (RGQGASHGAQAVHRRPGSIGGCATPG) is disordered.

The protein belongs to the universal ribosomal protein uL3 family. In terms of assembly, part of the 50S ribosomal subunit. Forms a cluster with proteins L14 and L19.

One of the primary rRNA binding proteins, it binds directly near the 3'-end of the 23S rRNA, where it nucleates assembly of the 50S subunit. The chain is Large ribosomal subunit protein uL3 from Mycolicibacterium vanbaalenii (strain DSM 7251 / JCM 13017 / BCRC 16820 / KCTC 9966 / NRRL B-24157 / PYR-1) (Mycobacterium vanbaalenii).